The following is a 137-amino-acid chain: Large ribosomal subunit protein uL11 (137 aa).

The protein belongs to the universal ribosomal protein uL11 family. Part of the ribosomal stalk of the 50S ribosomal subunit. Interacts with L10 and the large rRNA to form the base of the stalk. L10 forms an elongated spine to which L12 dimers bind in a sequential fashion forming a multimeric L10(L12)X complex. One or more lysine residues are methylated.

Functionally, forms part of the ribosomal stalk which helps the ribosome interact with GTP-bound translation factors. This Mycoplasma pneumoniae (strain ATCC 29342 / M129 / Subtype 1) (Mycoplasmoides pneumoniae) protein is Large ribosomal subunit protein uL11.